Consider the following 460-residue polypeptide: Lipase member H-A (460 aa).

The first 26 residues, 1 to 26, serve as a signal peptide directing secretion; that stretch reads MLLSFYFNGLLLVGCLLSWGRSDTEG. Residues Asn-67 and Asn-75 are each glycosylated (N-linked (GlcNAc...) asparagine). Ser-163 (nucleophile) is an active-site residue. An N-linked (GlcNAc...) asparagine glycan is attached at Asn-177. The active-site Charge relay system is the Asp-187. A disulfide bond links Cys-242 and Cys-255. The active-site Charge relay system is His-257. Intrachain disulfides connect Cys-279–Cys-290 and Cys-293–Cys-301. An N-linked (GlcNAc...) asparagine glycan is attached at Asn-289. Asn-366 carries an N-linked (GlcNAc...) asparagine glycan. Cys-436 and Cys-455 are oxidised to a cystine.

Belongs to the AB hydrolase superfamily. Lipase family.

The protein localises to the secreted. The protein resides in the cell membrane. The catalysed reaction is 1-hexadecanoyl-2-(9Z-octadecenoyl)-sn-glycero-3-phosphate + H2O = 2-(9Z-octadecenoyl)-sn-glycero-3-phosphate + hexadecanoate + H(+). In terms of biological role, hydrolyzes specifically phosphatidic acid (PA) to produce 2-acyl lysophosphatidic acid (LPA; a potent bioactive lipid mediator) and fatty acid. Does not hydrolyze other phospholipids, like phosphatidylserine (PS), phosphatidylcholine (PC) and phosphatidylethanolamine (PE) or triacylglycerol (TG). This chain is Lipase member H-A (liph-a), found in Xenopus laevis (African clawed frog).